The sequence spans 300 residues: Fatty acid hydroxylase uhd1 (300 aa).

NADP(+) is bound by residues 14-20, arginine 39, 63-64, 83-85, tyrosine 156, lysine 160, 183-186, and serine 199; these read GANGFVG, DL, VAS, and PVYI. Residue lysine 160 is the Proton donor of the active site.

Belongs to the NAD(P)-dependent epimerase/dehydratase family. Dihydroflavonol-4-reductase subfamily.

It functions in the pathway secondary metabolite biosynthesis. Functionally, fatty acid hydroxylase; part of the gene cluster that mediates the biosynthesis of the glycolipid biosurfactant ustilagic acid (UA). UA is a secreted cellobiose glycolipid that is toxic for many microorganisms and confers biocontrol activity to U.maydis. UA consists of 15,16-dihydroxypalmitic or 2,15,16-trihydroxypalmitic acid, which is O-glycosidically linked to cellobiose at its terminal hydroxyl group. In addition, the cellobiose moiety is acetylated and acylated with a short-chain hydroxy fatty acid. UA biosynthesis starts with omega-hydroxylation of palmitic acid catalyzed by the cytochrome P450 monooxygenase cyp1. Terminal hydroxylation of palmitic acid precedes subterminal hydroxylation catalyzed by the cytochrome P450 monooxygenase cyp2. Sequential glucosylation of the hydroxy fatty acid is probably catalyzed by the glycosyltransferase ugt1. The cellobiose lipid is further decorated by acetylation of the proximal glucose residue and by acylation with a short-chain beta-hydroxy fatty acid at the distal glucose residue. The acyltransferase uat1 may be a good candidate for catalyzing either acetylation or acylation of the cellobiose lipid. The fatty acid synthase fas2 may be involved in synthesis of the carbon backbone of the short-chain beta-hydroxy fatty acid esterified to the cellobiose disaccharide. The secreted UA consists of a mixture of both alpha-hydroxylated and non-hydroxylated glycolipids; therefore, alpha-hydroxylation of the long-chain fatty, catalyzed by the fatty acid hydroxylase ahd1, occurs late in UA biosynthesis and may be the last step before secretion. This chain is Fatty acid hydroxylase uhd1, found in Mycosarcoma maydis (Corn smut fungus).